We begin with the raw amino-acid sequence, 1204 residues long: MEQAPNMAEPRGPVDHGVQIRFITEPVSGAEMGTLRRGGRRPAKDARASTYGVAVRVQGIAGQPFVVLNSGEKGGDSFGVQIKGANDQGASGALSSDSELPENPYSQVRGFPAPSQSSTSDEDPGTQWNGKLLRSQSQASLAGPGPMDPSNRSTSMLDLAPKAASPGSTIDTAPLSSVDSLINKFDSQLRGQARGRTGHRTRMLPPEQRKRSKSLDSRLPRDTLEERERQSTNHWNPNTKYDNHVGSSKQPAQSPSPSPSPLSGLSRARQTQDWVLQSFEEPQGRAQDPTMLQFKSTPDLLRDQQEAAPPGSVDHMKATIYGILREGSSESETSVRRKVSLVLEKMQPLVMMSSGSSKAVAGQGELTRKVEELQRKLDEEVKKRQKLEPSRVGLERQLEEKTEECSQLQELLERRKGEAQQSNKELQNMKRLLDQGESLRHGLETQVVELQNKLKQVQGPEPAKEVLLKDLLETRELLEEVLEGKQRVEEQLRLRERELTALKGALKEEVASRDQEVEHVRQQCQRDTEQLRKSMQDATQDHAVLEAERQKMSALVRGLQRELEETSEETGHWQSMFQKNKEELRATKQELLQLRMEKEEMEEELGEKIEVLQRELEQARASAGDTRQVEVLKKLCQTQEELKELQAERQSQEVAGRHRDRELEKQLSVLRVEADRGRELEEQNFQLQKTLQQLRQNCEEASKAKMVAEAEAAVLGQRRAAVETTLRETQEENDEFRRRILGLEQQLKETRGLVDGGEAVEARLRDKLQRLEAEKQQLEEALNASQEEEGSLAAAKRALEARLEEAQRGLARLGQEQQTLNRALEEEGKQREVLRRSKAELEEQKRLLDKTVDRLNKELEQIGEASKQALQQLQSQLEDYKEKARREVADAQRQAKDWASEAEKTSGGLNRLQDEIQRLRQALQACQAERDTAQLDKELLAQRLQGLEQEAENKKRSQDDRARQLKGLEEKVSRLEAELDEEKNTVELLTDRVNRGRDQVDQLRTELMQERSARQDLECDKISLERQNKDLKTRLASSEGFQKPSASLSQLESQNQLLQERLQAEEREKTVLQSTNRKLERKVKELSIQIEDERQHVNDQKDQLSLRVKALKRQVDEAEEEIERLDGLRKKAQRELEEQHEVNEQLQARIKSLEKDSWRKASRSAAESTLKHEGLSSDEEFDGVYDPSSIASLLTESNLQTSSC.

Residues 7 to 359 (MAEPRGPVDH…VMMSSGSSKA (353 aa)) form a head region. The interval 25–48 (EPVSGAEMGTLRRGGRRPAKDARA) is disordered. The short motif at 48-62 (ASTYGVAVRVQGIAG) is the ZIM element. Residues 54-67 (AVRVQGIAGQPFVV) form an interaction with TJP1/ZO1 region. The disordered stretch occupies residues 68-269 (LNSGEKGGDS…SPLSGLSRAR (202 aa)). A phosphoserine mark is found at S95, S96, S98, S135, S137, S140, S155, and S165. Residues 126 to 140 (TQWNGKLLRSQSQAS) show a composition bias toward polar residues. The span at 166–190 (PGSTIDTAPLSSVDSLINKFDSQLR) shows a compositional bias: polar residues. The segment covering 207–231 (EQRKRSKSLDSRLPRDTLEERERQS) has biased composition (basic and acidic residues). Residues S214, S217, S260, S278, S340, and S353 each carry the phosphoserine modification. Positions 360–1161 (VAGQGELTRK…SLEKDSWRKA (802 aa)) form a coiled coil. The residue at position 581 (K581) is an N6-acetyllysine. Residues 1156–1182 (DSWRKASRSAAESTLKHEGLSSDEEFD) form a disordered region. A tail region spans residues 1162-1204 (SRSAAESTLKHEGLSSDEEFDGVYDPSSIASLLTESNLQTSSC). A phosphoserine mark is found at S1176 and S1177.

Belongs to the cingulin family. As to quaternary structure, homodimer. Interacts with TJP1/ZO1 and SPEF1.

It localises to the cell junction. The protein localises to the tight junction. In terms of biological role, probably plays a role in the formation and regulation of the tight junction (TJ) paracellular permeability barrier. The protein is Cingulin of Callithrix jacchus (White-tufted-ear marmoset).